We begin with the raw amino-acid sequence, 1566 residues long: Arginine-glutamic acid dipeptide repeats protein (1566 aa).

The segment covering 1–36 (MTADKDKDKDKEKDRDRDRDREREKRDKARESENSR) has biased composition (basic and acidic residues). The segment at 1-90 (MTADKDKDKD…KKKSRYERTD (90 aa)) is disordered. Ser-53 and Ser-56 each carry phosphoserine. Over residues 74 to 85 (KNKKKPPKKKSR) the composition is skewed to basic residues. In terms of domain architecture, BAH spans 103 to 283 (VVYRPGDCVY…PETRRLNSTQ (181 aa)). Residue Thr-120 is modified to Phosphothreonine. A phosphoserine mark is found at Ser-142 and Ser-304. In terms of domain architecture, ELM2 spans 284-387 (GEIRVGPSHQ…KALQRLVKKP (104 aa)). Residues 391 to 443 (LIEKCWTEDEVKRFVKGLRQYGKNFFRIRKELLPNKETGELITFYYYWKKTPE) enclose the SANT domain. The tract at residues 464–495 (TRTASTPVNTPSRPPSSEFLDLSSASEDDFDS) is disordered. A compositionally biased stretch (polar residues) spans 465–474 (RTASTPVNTP). Positions 479–488 (SSEFLDLSSA) are enriched in low complexity. The GATA-type zinc finger occupies 507-532 (CRHCFTTTSKDWHHGGRENILLCTDC). The disordered stretch occupies residues 542-1133 (LPPIEKPVDP…PSHASQSARF (592 aa)). Lys-560 is covalently cross-linked (Glycyl lysine isopeptide (Lys-Gly) (interchain with G-Cter in SUMO2)). Ser-594, Ser-600, and Ser-613 each carry phosphoserine. The segment covering 609 to 623 (SGRNSPSAASTSSND) has biased composition (low complexity). The span at 624–640 (SKAETVKKSAKKVKEEA) shows a compositional bias: basic and acidic residues. Residue Lys-637 forms a Glycyl lysine isopeptide (Lys-Gly) (interchain with G-Cter in SUMO2) linkage. Residues Ser-642, Ser-656, Ser-675, and Ser-679 each carry the phosphoserine modification. Basic and acidic residues predominate over residues 652–673 (EKVASDTEEADRTSSKKTKTQE). Residues 688–708 (SDSRSVNDEGSSDPKDIDQDN) show a composition bias toward basic and acidic residues. Residues 709 to 720 (RSTSPSIPSPQD) are compositionally biased toward polar residues. Residues 726–751 (DSSAQQQMLQAQPPALQAPTGVTPAP) show a composition bias toward low complexity. Residues 752–767 (SSAPPGTPQLPTPGPT) show a composition bias toward pro residues. Positions 778–796 (SPTASQAPNQPQAPTAPVP) are enriched in low complexity. The segment covering 809–827 (QRPPSPHPPPHPSPHPPLQ) has biased composition (pro residues). Residues 829–840 (LTGSAGQPSAPS) are compositionally biased toward polar residues. Composition is skewed to low complexity over residues 843–865 (QPPLHGQGPPGPHSLQAGPLLQH) and 897–913 (SLQLPASQSALQSQQPP). Pro residues predominate over residues 914 to 940 (REQPLPPAPLAMPHIKPPPTTPIPQLP). Residues 970–980 (KPLSSLSTHHP) show a composition bias toward low complexity. Residues 1030–1052 (PQPPFAQHPFVPGGPPPITPPTC) show a composition bias toward pro residues. Residues 1053 to 1085 (PSTSTPPAGPGTSAQPPCSGAAASGGSIAGGSS) are compositionally biased toward low complexity. Phosphoserine is present on residues Ser-1106, Ser-1113, and Ser-1115. A compositionally biased stretch (pro residues) spans 1106–1117 (SPPPPPRSPSPE). Thr-1119 carries the post-translational modification Phosphothreonine. Positions 1156-1211 (GSKLAKKREEAIEKAKREAEQKAREEREREKEKEKEREREREREREAERAAKASSS) form a coiled coil. The residue at position 1158 (Lys-1158) is an N6-acetyllysine. The segment covering 1162 to 1206 (KREEAIEKAKREAEQKAREEREREKEKEKEREREREREREAERAA) has biased composition (basic and acidic residues). Residues 1162–1246 (KREEAIEKAK…TTIAAVPPYI (85 aa)) form a disordered region. Tyr-1259 carries the post-translational modification Phosphotyrosine. Ser-1266 carries the phosphoserine modification.

As to quaternary structure, interacts with HDAC1. Interacts with ATN1. Interaction with ATN1 is improved when the poly-Gln region of ATN1 is extended. Interacts with FAT1. As to expression, widely expressed. Expressed in tumor cell lines.

Its subcellular location is the nucleus. In terms of biological role, plays a role as a transcriptional repressor during development. May play a role in the control of cell survival. Overexpression of RERE recruits BAX to the nucleus particularly to POD and triggers caspase-3 activation, leading to cell death. The sequence is that of Arginine-glutamic acid dipeptide repeats protein (RERE) from Homo sapiens (Human).